The primary structure comprises 488 residues: B-type flagellin (488 aa).

It belongs to the bacterial flagellin family. In terms of processing, phosphorylated on tyrosine residue(s).

Its subcellular location is the secreted. It localises to the bacterial flagellum. Flagellin is the subunit protein which polymerizes to form the filaments of bacterial flagella. The chain is B-type flagellin (fliC) from Pseudomonas aeruginosa (strain ATCC 15692 / DSM 22644 / CIP 104116 / JCM 14847 / LMG 12228 / 1C / PRS 101 / PAO1).